A 96-amino-acid polypeptide reads, in one-letter code: Conglutin delta 4 (96 aa).

The signal sequence occupies residues 1-22; that stretch reads MARLTILIAFVAALVLVVHTSA. Cystine bridges form between cysteine 29–cysteine 78 and cysteine 80–cysteine 91.

It belongs to the 2S seed storage albumins family.

It is found in the endoplasmic reticulum. This is Conglutin delta 4 from Lupinus angustifolius (Narrow-leaved blue lupine).